A 259-amino-acid chain; its full sequence is 3-deoxy-manno-octulosonate cytidylyltransferase 1 (259 aa).

It belongs to the KdsB family.

The protein resides in the cytoplasm. It catalyses the reaction 3-deoxy-alpha-D-manno-oct-2-ulosonate + CTP = CMP-3-deoxy-beta-D-manno-octulosonate + diphosphate. It functions in the pathway nucleotide-sugar biosynthesis; CMP-3-deoxy-D-manno-octulosonate biosynthesis; CMP-3-deoxy-D-manno-octulosonate from 3-deoxy-D-manno-octulosonate and CTP: step 1/1. It participates in bacterial outer membrane biogenesis; lipopolysaccharide biosynthesis. Its function is as follows. Activates KDO (a required 8-carbon sugar) for incorporation into bacterial lipopolysaccharide in Gram-negative bacteria. The protein is 3-deoxy-manno-octulosonate cytidylyltransferase 1 of Hydrogenovibrio crunogenus (strain DSM 25203 / XCL-2) (Thiomicrospira crunogena).